The following is a 208-amino-acid chain: UPF0637 protein BCG9842_B1177 (208 aa).

This sequence belongs to the UPF0637 family.

In Bacillus cereus (strain G9842), this protein is UPF0637 protein BCG9842_B1177.